An 82-amino-acid chain; its full sequence is Delta-conotoxin SVIE (82 aa).

The signal sequence occupies residues 1-22 (MKLTCVMIVAVLFLTTWTFVTA). The propeptide occupies 23–51 (DDSRYGLKNLFPKARHEMKNPEASKLNKR). 3 disulfide bridges follow: cysteine 54–cysteine 69, cysteine 61–cysteine 73, and cysteine 68–cysteine 77. Proline 65 is modified (4-hydroxyproline).

It belongs to the conotoxin O1 superfamily. Expressed by the venom duct.

It localises to the secreted. Delta-conotoxins bind to site 6 of voltage-gated sodium channels (Nav) and inhibit the inactivation process. Impairs rapid channel inactivation of Nav1.4/SCN4A (Kd=500 nM). Interacts with a conserved hydrophobic triad (YFV) in the domain-4 voltage sensor of sodium channels. In vivo, injection of both native or synthetic peptide induces twitching of back limbs, running in circles, and spastic paralysis. In Conus striatus (Striated cone), this protein is Delta-conotoxin SVIE (SO6).